Reading from the N-terminus, the 423-residue chain is MGMTIAEKILADHSEREEVKPGEIVMAKLDFVFGNDVTMPLAIKKFRELGVKRVFDRERIAIVLDHFTPNKDIKSAEQCKSSREFAKEMGIKWFFEGGSVGVEHCLLPELGLVLPGDLIIGADSHTCTYGALGAFATGVGSTDLAVAMATGEAWFRVPETMKFIYEGELQPYVTGKDLILHTIGDIGVNGALYKVMEFSGSVIEELSVEQRMTMSNMAIEAGAKTGIIEPDKKTLDYVKERAKRKFKVYKSDEDAKYYKVIEYDVTNWEPVVAFPHLPENTVPISKAAKMNIKIDQVFIGSCTNGRIEDLRMAAEILEGQKVAKWVRLIVIPCSPTVYWKALKEGLIEIFLEAGAVIGPPTCGPCLGGHMGVLASGERAVSTTNRNFVGRMGHPKSEVYLANPYVAAASAVLGRIASPEEVVK.

[4Fe-4S] cluster is bound by residues Cys302, Cys362, and Cys365.

The protein belongs to the aconitase/IPM isomerase family. LeuC type 2 subfamily. As to quaternary structure, heterodimer of LeuC and LeuD. It depends on [4Fe-4S] cluster as a cofactor.

The enzyme catalyses (2R,3S)-3-isopropylmalate = (2S)-2-isopropylmalate. It functions in the pathway amino-acid biosynthesis; L-leucine biosynthesis; L-leucine from 3-methyl-2-oxobutanoate: step 2/4. Catalyzes the isomerization between 2-isopropylmalate and 3-isopropylmalate, via the formation of 2-isopropylmaleate. The polypeptide is 3-isopropylmalate dehydratase large subunit 1 (Pyrococcus abyssi (strain GE5 / Orsay)).